Here is a 495-residue protein sequence, read N- to C-terminus: Trigger factor (495 aa).

In terms of domain architecture, PPIase FKBP-type spans 169–254; it reads GDRVAMDYVG…VKDVAAPGAV (86 aa). The interval 441-495 is disordered; sequence LAEDEGEAKAETKKAAPKKKAAAKTEAAEAGEGEEAAAPKKKAAPKKKAADESAE.

Belongs to the FKBP-type PPIase family. Tig subfamily.

It is found in the cytoplasm. It carries out the reaction [protein]-peptidylproline (omega=180) = [protein]-peptidylproline (omega=0). Its function is as follows. Involved in protein export. Acts as a chaperone by maintaining the newly synthesized protein in an open conformation. Functions as a peptidyl-prolyl cis-trans isomerase. In Rhizobium etli (strain CIAT 652), this protein is Trigger factor.